Consider the following 130-residue polypeptide: Small ribosomal subunit protein uS9 (130 aa).

This sequence belongs to the universal ribosomal protein uS9 family.

The protein is Small ribosomal subunit protein uS9 of Streptococcus mutans serotype c (strain ATCC 700610 / UA159).